Reading from the N-terminus, the 252-residue chain is 5-oxoprolinase subunit A (252 aa).

It belongs to the LamB/PxpA family. As to quaternary structure, forms a complex composed of PxpA, PxpB and PxpC.

It catalyses the reaction 5-oxo-L-proline + ATP + 2 H2O = L-glutamate + ADP + phosphate + H(+). Its function is as follows. Catalyzes the cleavage of 5-oxoproline to form L-glutamate coupled to the hydrolysis of ATP to ADP and inorganic phosphate. The sequence is that of 5-oxoprolinase subunit A from Mycobacterium ulcerans (strain Agy99).